A 173-amino-acid polypeptide reads, in one-letter code: HTH-type transcriptional regulator IscR (173 aa).

Positions 2–131 (RLTSKGRYAV…NNITLGELMM (130 aa)) constitute an HTH rrf2-type domain. The segment at residues 28–51 (LADISERQGISLSYLEQLFSKLRK) is a DNA-binding region (H-T-H motif). Residues C92, C98, and C104 each contribute to the [2Fe-2S] cluster site.

It depends on [2Fe-2S] cluster as a cofactor.

Functionally, regulates the transcription of several operons and genes involved in the biogenesis of Fe-S clusters and Fe-S-containing proteins. The protein is HTH-type transcriptional regulator IscR of Vibrio cholerae serotype O1 (strain ATCC 39315 / El Tor Inaba N16961).